A 193-amino-acid chain; its full sequence is Epididymal-specific lipocalin-12 (193 aa).

An N-terminal signal peptide occupies residues 1 to 19 (MGPWWALWLILTLPQILGG). Cysteine 88 and cysteine 193 are oxidised to a cystine. Asparagine 143 and asparagine 172 each carry an N-linked (GlcNAc...) asparagine glycan.

The protein belongs to the calycin superfamily. Lipocalin family. In terms of assembly, monomer.

Its subcellular location is the secreted. Functionally, binds all-trans retinoic acid and may act as a retinoid carrier protein within the epididymis. May play a role in male fertility. The protein is Epididymal-specific lipocalin-12 (Lcn12) of Rattus norvegicus (Rat).